The primary structure comprises 723 residues: DNA-binding protein RFX2 (723 aa).

A disordered region spans residues 1–46; sequence MQNSEGGADSPASVALRPSAAAPPVPASPQRVLVQAASSAPKGAQM. The segment covering 10–20 has biased composition (low complexity); sequence SPASVALRPSA. Ser-28 is subject to Phosphoserine. The RFX-type winged-helix DNA-binding region spans 199-274; it reads HLQWLLDNYE…YHYYGIRLKP (76 aa). The segment at 292–332 is disordered; the sequence is QQPMHQKPRYRPAQKTDSLGDSGSHSSLHSTPEQTMAAQSQ. Residues 307 to 322 show a composition bias toward low complexity; sequence TDSLGDSGSHSSLHST. Positions 323 to 332 are enriched in polar residues; sequence PEQTMAAQSQ. Ser-416 bears the Phosphoserine mark. Residues 689 to 723 are disordered; sequence GDERRGSEAGPDAHSLGEPLVKRERSDPNHSLQGI.

Belongs to the RFX family. In terms of assembly, homodimer; probably only forms homodimers in testis. Heterodimer; heterodimerizes with RFX1 and RFX3.

The protein localises to the nucleus. It is found in the cytoplasm. Functionally, transcription factor that acts as a key regulator of spermatogenesis. Acts by regulating expression of genes required for the haploid phase during spermiogenesis, such as genes required for cilium assembly and function. Recognizes and binds the X-box, a regulatory motif with DNA sequence 5'-GTNRCC(0-3N)RGYAAC-3' present on promoters. Probably activates transcription of the testis-specific histone gene H1-6. This chain is DNA-binding protein RFX2 (RFX2), found in Macaca fascicularis (Crab-eating macaque).